Here is a 321-residue protein sequence, read N- to C-terminus: Nucleotide-binding protein LI0459 (321 aa).

41-48 (GMSGAGKS) lines the ATP pocket.

The protein belongs to the RapZ-like family.

In terms of biological role, displays ATPase and GTPase activities. This chain is Nucleotide-binding protein LI0459, found in Lawsonia intracellularis (strain PHE/MN1-00).